The primary structure comprises 106 residues: Small membrane A-kinase anchor protein (106 aa).

Gly-2 is lipidated: N-myristoyl glycine. Residue Cys-3 is the site of S-palmitoyl cysteine attachment. Ser-40 bears the Phosphoserine mark. The PKA-RI-binding stretch occupies residues 62–85 (ALILEFADRLASEIVEDALQQWAC). Ser-98 bears the Phosphoserine mark.

Belongs to the small membrane AKAP family. In terms of assembly, interacts with PKA type I regulatory subunits PRKAR1A and PRKAR1B. Also binds to type II regulatory subunits, but at a tenfold lower affinity. May be palmitoylated at Cys-3. As to expression, widely expressed, with very low levels in spleen and liver.

It is found in the cell membrane. Its function is as follows. Binds to type I regulatory subunits of protein kinase A (PKA-RI) and may anchor/target them to the plasma membrane. The protein is Small membrane A-kinase anchor protein of Mus musculus (Mouse).